Consider the following 251-residue polypeptide: 3-deoxy-manno-octulosonate cytidylyltransferase (251 aa).

The protein belongs to the KdsB family.

The protein resides in the cytoplasm. It carries out the reaction 3-deoxy-alpha-D-manno-oct-2-ulosonate + CTP = CMP-3-deoxy-beta-D-manno-octulosonate + diphosphate. It functions in the pathway nucleotide-sugar biosynthesis; CMP-3-deoxy-D-manno-octulosonate biosynthesis; CMP-3-deoxy-D-manno-octulosonate from 3-deoxy-D-manno-octulosonate and CTP: step 1/1. Its pathway is bacterial outer membrane biogenesis; lipopolysaccharide biosynthesis. Its function is as follows. Activates KDO (a required 8-carbon sugar) for incorporation into bacterial lipopolysaccharide in Gram-negative bacteria. The protein is 3-deoxy-manno-octulosonate cytidylyltransferase of Rhizobium leguminosarum bv. trifolii (strain WSM2304).